The chain runs to 97 residues: YcgL domain-containing protein APP7_0754 (97 aa).

The region spanning Asn6–Leu90 is the YcgL domain.

This Actinobacillus pleuropneumoniae serotype 7 (strain AP76) protein is YcgL domain-containing protein APP7_0754.